The primary structure comprises 279 residues: Large ribosomal subunit protein uL2 (279 aa).

Positions 223 to 279 (MAMNPVDHPMGGGEGKSKSGGGRKHPKSPWGQLAKGLKTRNKKKASSKLIVRGRKSK) are disordered. Residues 232-242 (MGGGEGKSKSG) are compositionally biased toward gly residues. Basic residues predominate over residues 259-279 (LKTRNKKKASSKLIVRGRKSK).

The protein belongs to the universal ribosomal protein uL2 family. As to quaternary structure, part of the 50S ribosomal subunit. Forms a bridge to the 30S subunit in the 70S ribosome.

One of the primary rRNA binding proteins. Required for association of the 30S and 50S subunits to form the 70S ribosome, for tRNA binding and peptide bond formation. It has been suggested to have peptidyltransferase activity; this is somewhat controversial. Makes several contacts with the 16S rRNA in the 70S ribosome. This chain is Large ribosomal subunit protein uL2, found in Prosthecochloris aestuarii (strain DSM 271 / SK 413).